Reading from the N-terminus, the 315-residue chain is Homocysteine S-methyltransferase YbgG (315 aa).

A Hcy-binding domain is found at 2 to 309 (NPIQHILDTY…ENIQEIAAWA (308 aa)). Residues C229, C294, and C295 each coordinate Zn(2+).

Zn(2+) serves as cofactor.

It catalyses the reaction S-methyl-L-methionine + L-homocysteine = 2 L-methionine + H(+). This chain is Homocysteine S-methyltransferase YbgG (ybgG), found in Bacillus subtilis (strain 168).